A 614-amino-acid chain; its full sequence is MFNKIFSWFENRLNPYPESNPTTPKKGLFRFIWSSITGMKGWIFLLAILTVGTGVMEAVLFQFMGTLVDWLGTFTPERLWQEKSHLLIGMAALLLISIVWGFLASAVHLQTLQGVFPMRLRWNFHRLMLGQSLSFYQDEFAGRVSAKVMQTALAVRDTVLTLANMFVYVLVYFITSGVVLVALDSWFLLPFITWIILFGLILRTLIPKLSKTAQRQADARSLMTGRITDAYSNIATVKLFSHGSREATYAKRSMQDFMVTVHAQMRLATSLDTLTYATNILLTLSTAILGIILWKNGQVGVGAIATATAMALRVNGLSRWIMWESARLFENIGTVNDGMNTLTKPHTIVDKPQASPLQVKQGEIKFNDITFAYDPTKPLLNHFNLTIKPGEKVGLIGRSGAGKSTIVNLLLRFYEAQQGEITIDGQNVLNVQQESLRRQIGLVTQDTSLLHRSVRDNIIYGRPNATDEEMVLAAERAEAADFIPFLSDSQGRKGYDAHVGERGVKLSGGQRQRIAIARVMLKDAPILLLDEATSALDSEVEVAIQESLDKMMENKTVIAIAHRLSTIAAMDRLIVLDKGQIVEQGTHAELLELNGLYAKLWNHQSGGFLSESAE.

4 consecutive transmembrane segments (helical) span residues 41–61 (GWIFLLAILTVGTGVMEAVLF), 87–107 (LIGMAALLLISIVWGFLASAV), 157–177 (DTVLTLANMFVYVLVYFITSG), and 178–198 (VVLVALDSWFLLPFITWIILF). In terms of domain architecture, ABC transmembrane type-1 spans 43 to 330 (IFLLAILTVG…IMWESARLFE (288 aa)). The ABC transporter domain occupies 364-603 (IKFNDITFAY…NGLYAKLWNH (240 aa)). 397–404 (GRSGAGKS) contacts ATP.

The protein belongs to the ABC transporter superfamily.

Its subcellular location is the cell membrane. This is an uncharacterized protein from Haemophilus influenzae (strain ATCC 51907 / DSM 11121 / KW20 / Rd).